We begin with the raw amino-acid sequence, 48 residues long: Toxin CSTX-15 (48 aa).

Cystine bridges form between Cys3–Cys18, Cys10–Cys27, Cys17–Cys42, and Cys29–Cys40.

The protein belongs to the neurotoxin 19 (CSTX) family. 12 subfamily. In terms of assembly, heterodimer of A and B chains; disulfide-linked. Post-translationally, contains 4 disulfide bonds. As to expression, expressed by the venom gland.

Its subcellular location is the secreted. This is Toxin CSTX-15 from Cupiennius salei (American wandering spider).